The following is a 270-amino-acid chain: 3-phenylpropionate-dihydrodiol/cinnamic acid-dihydrodiol dehydrogenase (270 aa).

10–34 (FITGGGSGLGLALVERFIEEGAQVA) lines the NAD(+) pocket. Ser-143 is a substrate binding site. Tyr-156 serves as the catalytic Proton acceptor.

The protein belongs to the short-chain dehydrogenases/reductases (SDR) family.

It carries out the reaction 3-(cis-5,6-dihydroxycyclohexa-1,3-dien-1-yl)propanoate + NAD(+) = 3-(2,3-dihydroxyphenyl)propanoate + NADH + H(+). The catalysed reaction is (2E)-3-(cis-5,6-dihydroxycyclohexa-1,3-dien-1-yl)prop-2-enoate + NAD(+) = (2E)-3-(2,3-dihydroxyphenyl)prop-2-enoate + NADH + H(+). It functions in the pathway aromatic compound metabolism; 3-phenylpropanoate degradation. In terms of biological role, converts 3-phenylpropionate-dihydrodiol (PP-dihydrodiol) and cinnamic acid-dihydrodiol (CI-dihydrodiol) into 3-(2,3-dihydroxylphenyl)propanoic acid (DHPP) and 2,3-dihydroxicinnamic acid (DHCI), respectively. The protein is 3-phenylpropionate-dihydrodiol/cinnamic acid-dihydrodiol dehydrogenase of Escherichia coli (strain ATCC 8739 / DSM 1576 / NBRC 3972 / NCIMB 8545 / WDCM 00012 / Crooks).